A 150-amino-acid chain; its full sequence is Protein-export protein SecB (150 aa).

The protein belongs to the SecB family. In terms of assembly, homotetramer, a dimer of dimers. One homotetramer interacts with 1 SecA dimer.

Its subcellular location is the cytoplasm. One of the proteins required for the normal export of preproteins out of the cell cytoplasm. It is a molecular chaperone that binds to a subset of precursor proteins, maintaining them in a translocation-competent state. It also specifically binds to its receptor SecA. The chain is Protein-export protein SecB from Chromobacterium violaceum (strain ATCC 12472 / DSM 30191 / JCM 1249 / CCUG 213 / NBRC 12614 / NCIMB 9131 / NCTC 9757 / MK).